We begin with the raw amino-acid sequence, 369 residues long: Methylthioribose-1-phosphate isomerase (369 aa).

Substrate-binding positions include 54-56, Arg95, and Gln208; that span reads RGA. Asp249 acts as the Proton donor in catalysis. 259-260 is a substrate binding site; it reads NK.

This sequence belongs to the eIF-2B alpha/beta/delta subunits family. MtnA subfamily.

The enzyme catalyses 5-(methylsulfanyl)-alpha-D-ribose 1-phosphate = 5-(methylsulfanyl)-D-ribulose 1-phosphate. Its pathway is amino-acid biosynthesis; L-methionine biosynthesis via salvage pathway; L-methionine from S-methyl-5-thio-alpha-D-ribose 1-phosphate: step 1/6. Its function is as follows. Catalyzes the interconversion of methylthioribose-1-phosphate (MTR-1-P) into methylthioribulose-1-phosphate (MTRu-1-P). This is Methylthioribose-1-phosphate isomerase from Desulfosudis oleivorans (strain DSM 6200 / JCM 39069 / Hxd3) (Desulfococcus oleovorans).